Here is a 348-residue protein sequence, read N- to C-terminus: Rhodopsin (348 aa).

Residue methionine 1 is modified to N-acetylmethionine. The Extracellular portion of the chain corresponds to methionine 1–glutamine 36. 2 N-linked (GlcNAc...) asparagine glycosylation sites follow: asparagine 2 and asparagine 15. The chain crosses the membrane as a helical span at residues phenylalanine 37–valine 61. The Cytoplasmic segment spans residues threonine 62–asparagine 73. The chain crosses the membrane as a helical span at residues tyrosine 74–tyrosine 96. Topologically, residues threonine 97–cysteine 110 are extracellular. Cysteine 110 and cysteine 187 are disulfide-bonded. A helical membrane pass occupies residues asparagine 111–isoleucine 133. The 'Ionic lock' involved in activated form stabilization motif lies at glutamate 134–tyrosine 136. Residues glutamate 134–histidine 152 are Cytoplasmic-facing. The helical transmembrane segment at alanine 153–valine 173 threads the bilayer. Residues glycine 174–serine 202 are Extracellular-facing. Residue glutamate 201 coordinates Zn(2+). A helical transmembrane segment spans residues phenylalanine 203–glycine 224. Topologically, residues glutamine 225–arginine 252 are cytoplasmic. A helical transmembrane segment spans residues methionine 253 to tyrosine 274. Topologically, residues isoleucine 275–isoleucine 286 are extracellular. Glutamine 279 serves as a coordination point for Zn(2+). The helical transmembrane segment at phenylalanine 287–methionine 308 threads the bilayer. The residue at position 296 (lysine 296) is an N6-(retinylidene)lysine. The Cytoplasmic portion of the chain corresponds to methionine 309–alanine 348. S-palmitoyl cysteine attachment occurs at residues cysteine 322 and cysteine 323. An interaction with SAG region spans residues aspartate 330 to alanine 348. Position 334 is a phosphoserine (serine 334). At serine 334 the chain carries Phosphoserine; by RK and GRK7. Threonine 335 and threonine 336 each carry phosphothreonine. 2 positions are modified to phosphothreonine; by RK and GRK7: threonine 335 and threonine 336. Phosphoserine; by RK and GRK7 is present on serine 338. A phosphothreonine mark is found at threonine 340 and threonine 342. Residue serine 343 is modified to Phosphoserine; by RK and GRK7.

Belongs to the G-protein coupled receptor 1 family. Opsin subfamily. In terms of assembly, homodimer. May form a complex composed of RHO, GRK1 and RCVRN in a Ca(2+)-dependent manner; RCVRN prevents the interaction between GRK1 and RHO. Interacts with GRK1. Interacts (phosphorylated form) with SAG. Interacts with GNAT1. Interacts with GNAT3. SAG and G-proteins compete for a common binding site. Interacts with PRCD; the interaction promotes PRCD stability. Forms a complex with ASAP1 and ARF4. Forms a complex with ASAP1, RAB11A, Rabin8/RAB3IP, ARF4 and RAB11FIP3; the complex regulates Golgi-to-cilia rhodopsin/RHO transport in photoreceptors. Post-translationally, phosphorylated on some or all of the serine and threonine residues present in the C-terminal region. In terms of processing, contains one covalently linked retinal chromophore. Upon light absorption, the covalently bound 11-cis-retinal is converted to all-trans-retinal. After hydrolysis of the Schiff base and release of the covalently bound all-trans-retinal, active rhodopsin is regenerated by binding of a fresh molecule of 11-cis-retinal.

Its subcellular location is the membrane. It is found in the cell projection. The protein resides in the cilium. It localises to the photoreceptor outer segment. Its function is as follows. Photoreceptor required for image-forming vision at low light intensity. Required for photoreceptor cell viability after birth. Light-induced isomerization of 11-cis to all-trans retinal triggers a conformational change that activates signaling via G-proteins. Subsequent receptor phosphorylation mediates displacement of the bound G-protein alpha subunit by the arrestin SAG and terminates signaling. This Ovis aries (Sheep) protein is Rhodopsin (RHO).